Here is a 239-residue protein sequence, read N- to C-terminus: Tetraspanin-9 (239 aa).

Topologically, residues 1–13 (MARGCLCCLKYMM) are cytoplasmic. Residues 14 to 34 (FLFNLIFWLCGCGLLGVGIWL) traverse the membrane as a helical segment. Over 35 to 55 (SVSQGNFATFSPSFPSLSAAN) the chain is Extracellular. The chain crosses the membrane as a helical span at residues 56-76 (LVIAIGTIVMVTGFLGCLGAI). The Cytoplasmic portion of the chain corresponds to 77–85 (KENKCLLLS). The helical transmembrane segment at 86-106 (FFIILLIILLAELILLILFFV) threads the bilayer. Over 107-203 (YMDKVNENAK…VKMWFDDNKH (97 aa)) the chain is Extracellular. N-linked (GlcNAc...) asparagine glycosylation occurs at N180. Residues 204 to 224 (VLGTIGMCILIIQILGMAFSM) form a helical membrane-spanning segment. Residues 225–239 (TLFQQIHRTGKKYDA) lie on the Cytoplasmic side of the membrane.

It belongs to the tetraspanin (TM4SF) family.

Its subcellular location is the membrane. The chain is Tetraspanin-9 (tspan9) from Xenopus tropicalis (Western clawed frog).